Here is a 176-residue protein sequence, read N- to C-terminus: Large ribosomal subunit protein uL6 (176 aa).

The protein belongs to the universal ribosomal protein uL6 family. In terms of assembly, part of the 50S ribosomal subunit.

In terms of biological role, this protein binds to the 23S rRNA, and is important in its secondary structure. It is located near the subunit interface in the base of the L7/L12 stalk, and near the tRNA binding site of the peptidyltransferase center. The chain is Large ribosomal subunit protein uL6 from Thiobacillus denitrificans (strain ATCC 25259 / T1).